Consider the following 725-residue polypeptide: MFRVGSWLYGKKPAANASTQSLDSLVELRDLEDAMRAATLILNDDVDGAEAGLAEGTSAFHNLGRGVVAFIRATLGFEQDIMRQASERLNEAETSASVDQHRAQHNSYAPNTYHSPMYLPGTEFALCQAIAQLMSAIVGVLNESLTESIKAFYRLRKAYITLDAILKMEQKYMEESRAATLVESTTSGSVPSSLRHSSSNLHSSSSSISSAKGKEAAADTLAAPSNDTDVQERLADLNLSGEPAVAEDPGQTPTPINTDILDHDPDSDIFQNQIDVFVHSGSNFCFGVLLLLISMVPPSFSKLLSIIGFHGDKERGLKMLWQASKFHNLIGGIAAFAILGYYNGFVRYCDIMPDSIPGKDGDVQGYPQKRLELLLAKMRERFPKSQLWLLEESRMSGANKNLDRALELLCGEERSPLKQVEALRVFERSLNAMYLHKYELCADSFLECVDLNSWSRSLYYYIAGSCHLSLYRDAKETDSAKAAKHAELAEKYFRMAPTVAGKKRFMARQLPFDVFVARKFAKWEARAKEWKVSLVDAVGVDPIEEMIFFWNGHSRMTDEQLQESLQKLAWSESSANTTWSREGPEEKAILKLLRAAVHRSLRKHTQAKEMLEDILGQDRTLFKGHLKDDWICPVAHFEMAANLWMERPTYIATHGGAKQDSNKESARPASVNDALQYEREKVRKCKEYLEKAAKWESYELDARIGLKVTAAMEAVQKWESTHPTL.

A disordered region spans residues 187–209; that stretch reads SGSVPSSLRHSSSNLHSSSSSIS.

This sequence belongs to the IML2 family. As to quaternary structure, interacts with lipid droplet proteins.

The protein resides in the cytoplasm. Its subcellular location is the nucleus. In terms of biological role, inclusion body (IB) resident protein that interacts strongly with lipid droplet (LD) proteins. Involved in LD-mediated IB clearing after protein folding stress, probably by enabling access to the IBs of an LD-stored soluble sterol derivative that acts as a chaperone in inclusion clearing. The protein is Inclusion body clearance protein iml2 (iml2) of Aspergillus fumigatus (strain ATCC MYA-4609 / CBS 101355 / FGSC A1100 / Af293) (Neosartorya fumigata).